The sequence spans 320 residues: Malate dehydrogenase (320 aa).

NAD(+)-binding positions include 10 to 15 and D34; that span reads GSGMIG. Substrate is bound by residues R83 and R89. NAD(+)-binding positions include N96 and 119 to 121; that span reads ITN. Substrate contacts are provided by N121 and R152. H176 (proton acceptor) is an active-site residue.

This sequence belongs to the LDH/MDH superfamily. MDH type 3 family.

It catalyses the reaction (S)-malate + NAD(+) = oxaloacetate + NADH + H(+). Its function is as follows. Catalyzes the reversible oxidation of malate to oxaloacetate. The chain is Malate dehydrogenase from Allorhizobium ampelinum (strain ATCC BAA-846 / DSM 112012 / S4) (Agrobacterium vitis (strain S4)).